The following is a 154-amino-acid chain: OCIA domain-containing protein 2 (154 aa).

The tract at residues Met-1–Gln-22 is disordered. Residues Met-1–Ala-120 form the OCIA domain. Lys-41 carries the N6-acetyllysine modification.

Interacts (via OCIA domain) with OCIAD1/ASRIJ and STAT3.

It is found in the endosome. The protein localises to the mitochondrion. Its subcellular location is the mitochondrion inner membrane. Has an essential role in the assembly of mitochondrial respiratory chain complex III. Is also required for STAT3 activation and plays a role in cell migration. The polypeptide is OCIA domain-containing protein 2 (OCIAD2) (Homo sapiens (Human)).